A 55-amino-acid chain; its full sequence is uncharacterized protein (55 aa).

This is an uncharacterized protein from Mycobacterium tuberculosis (strain ATCC 25618 / H37Rv).